The primary structure comprises 437 residues: Serine--tRNA ligase (437 aa).

240-242 (TAE) is a binding site for L-serine. 271–273 (RAE) lines the ATP pocket. Glutamate 294 lines the L-serine pocket. 358 to 361 (EISS) lines the ATP pocket. Residue serine 394 participates in L-serine binding.

This sequence belongs to the class-II aminoacyl-tRNA synthetase family. Type-1 seryl-tRNA synthetase subfamily. As to quaternary structure, homodimer. The tRNA molecule binds across the dimer.

It localises to the cytoplasm. The enzyme catalyses tRNA(Ser) + L-serine + ATP = L-seryl-tRNA(Ser) + AMP + diphosphate + H(+). The catalysed reaction is tRNA(Sec) + L-serine + ATP = L-seryl-tRNA(Sec) + AMP + diphosphate + H(+). The protein operates within aminoacyl-tRNA biosynthesis; selenocysteinyl-tRNA(Sec) biosynthesis; L-seryl-tRNA(Sec) from L-serine and tRNA(Sec): step 1/1. Functionally, catalyzes the attachment of serine to tRNA(Ser). Is also able to aminoacylate tRNA(Sec) with serine, to form the misacylated tRNA L-seryl-tRNA(Sec), which will be further converted into selenocysteinyl-tRNA(Sec). This Methylobacterium nodulans (strain LMG 21967 / CNCM I-2342 / ORS 2060) protein is Serine--tRNA ligase.